A 292-amino-acid polypeptide reads, in one-letter code: Protease HtpX (292 aa).

2 helical membrane-spanning segments follow: residues 5–25 (IFLF…VMSV) and 34–54 (SGLL…SLLL). Histidine 140 serves as a coordination point for Zn(2+). Glutamate 141 is an active-site residue. Histidine 144 provides a ligand contact to Zn(2+). 2 consecutive transmembrane segments (helical) span residues 155–175 (LLQG…GGII) and 193–213 (IIVF…AMWF). Position 218 (glutamate 218) interacts with Zn(2+).

It belongs to the peptidase M48B family. Zn(2+) serves as cofactor.

It localises to the cell inner membrane. The polypeptide is Protease HtpX (Xanthomonas oryzae pv. oryzae (strain PXO99A)).